The primary structure comprises 261 residues: Carnitinyl-CoA dehydratase (261 aa).

The active-site Nucleophile is Glu-111. Glu-131 acts as the Proton acceptor in catalysis.

This sequence belongs to the enoyl-CoA hydratase/isomerase family.

The catalysed reaction is (R)-carnitinyl-CoA = crotonobetainyl-CoA + H2O. Its pathway is amine and polyamine metabolism; carnitine metabolism. Its function is as follows. Catalyzes the reversible dehydration of L-carnitinyl-CoA to crotonobetainyl-CoA. This is Carnitinyl-CoA dehydratase from Escherichia coli O6:K15:H31 (strain 536 / UPEC).